The chain runs to 365 residues: Peptide chain release factor 2 (365 aa).

Gln-252 bears the N5-methylglutamine mark.

It belongs to the prokaryotic/mitochondrial release factor family. In terms of processing, methylated by PrmC. Methylation increases the termination efficiency of RF2.

Its subcellular location is the cytoplasm. Functionally, peptide chain release factor 2 directs the termination of translation in response to the peptide chain termination codons UGA and UAA. The polypeptide is Peptide chain release factor 2 (Klebsiella pneumoniae (strain 342)).